The primary structure comprises 145 residues: Large ribosomal subunit protein uL15 (145 aa).

Residues 1–52 (MRLNTLSPAAGSKRVKHRPGRGIGSGLGKTGGRGVKGQTSRSGGGKVRNGFE) form a disordered region. Composition is skewed to gly residues over residues 21–35 (RGIG…GRGV) and 42–52 (SGGGKVRNGFE).

Belongs to the universal ribosomal protein uL15 family. As to quaternary structure, part of the 50S ribosomal subunit.

In terms of biological role, binds to the 23S rRNA. The protein is Large ribosomal subunit protein uL15 of Aeromonas hydrophila subsp. hydrophila (strain ATCC 7966 / DSM 30187 / BCRC 13018 / CCUG 14551 / JCM 1027 / KCTC 2358 / NCIMB 9240 / NCTC 8049).